Reading from the N-terminus, the 255-residue chain is Putative esterase YitV (255 aa).

This chain is Putative esterase YitV (yitV), found in Bacillus subtilis (strain 168).